The chain runs to 657 residues: Hemocyanin (657 aa).

Asn-167 carries an N-linked (GlcNAc...) asparagine glycan. Cu cation is bound by residues His-194, His-198, His-224, His-344, His-348, and His-384. 2 cysteine pairs are disulfide-bonded: Cys-483/Cys-502 and Cys-562/Cys-609.

The protein belongs to the tyrosinase family. Hemocyanin subfamily. As to quaternary structure, it consists of at least four very similar subunits. In terms of tissue distribution, hemolymph.

Its subcellular location is the secreted. It localises to the extracellular space. Functionally, hemocyanins are copper-containing oxygen carriers occurring freely dissolved in the hemolymph of many mollusks and arthropods. In Palinurus vulgaris (European spiny lobster), this protein is Hemocyanin.